The primary structure comprises 150 residues: MLYHLFVNNQVKLQNDFKPESVAAIRSSAFNSKGGTTVFNFLSAGENILLHISIRPGENVIVFNSRLKNGAWGPEERIPYAEKFRPPNPSITVIDHGDRFQIRFDYGTSIYYNKRIKENAAAIAYNAENSLFSSPVTVDVHGLLPPLPPA.

The Galectin domain occupies 9–141; that stretch reads NQVKLQNDFK…FSSPVTVDVH (133 aa). A carbohydrate contacts are provided by H51, R55, N64, E75, and R77.

As to quaternary structure, homotetramer. Oligomerization is required for carbohydrate binding.

The protein resides in the secreted. Its subcellular location is the extracellular space. It is found in the extracellular matrix. It localises to the cell wall. The protein localises to the endomembrane system. Functionally, binds lactose. May play a role in fruiting body formation. Displays toxicity towards the nematode C.elegans by binding to a specific Gal-beta-1,4-Fuc-alpha-1,6 modification of N-glycan cores on C.elegans intestinal cells. This is Galectin-2 (Cgl2) from Coprinopsis cinerea (Inky cap fungus).